We begin with the raw amino-acid sequence, 198 residues long: HTH-type transcriptional regulator BetI (198 aa).

Residues 8-68 (PIRRQQLIDA…ATMRYLISHL (61 aa)) enclose the HTH tetR-type domain. Residues 31 to 50 (TIAQIARRAGVSNGIISHYF) constitute a DNA-binding region (H-T-H motif).

It functions in the pathway amine and polyamine biosynthesis; betaine biosynthesis via choline pathway [regulation]. Its function is as follows. Repressor involved in the biosynthesis of the osmoprotectant glycine betaine. It represses transcription of the choline transporter BetT and the genes of BetAB involved in the synthesis of glycine betaine. In Serratia proteamaculans (strain 568), this protein is HTH-type transcriptional regulator BetI.